The primary structure comprises 608 residues: UvrABC system protein C (608 aa).

The region spanning histidine 13 to valine 91 is the GIY-YIG domain. Residues glutamine 201–valine 236 enclose the UVR domain.

It belongs to the UvrC family. Interacts with UvrB in an incision complex.

The protein localises to the cytoplasm. Functionally, the UvrABC repair system catalyzes the recognition and processing of DNA lesions. UvrC both incises the 5' and 3' sides of the lesion. The N-terminal half is responsible for the 3' incision and the C-terminal half is responsible for the 5' incision. The protein is UvrABC system protein C of Mannheimia succiniciproducens (strain KCTC 0769BP / MBEL55E).